A 395-amino-acid polypeptide reads, in one-letter code: Elongation factor Tu (395 aa).

The region spanning 10–204 (KPHVNIGTIG…EVDAYIPTPE (195 aa)) is the tr-type G domain. Positions 19–26 (GHVDHGKT) are G1. 19-26 (GHVDHGKT) contributes to the GTP binding site. Thr-26 lines the Mg(2+) pocket. A G2 region spans residues 60-64 (GITIS). Residues 81-84 (DCPG) are G3. Residues 81–85 (DCPGH) and 136–139 (NKCD) each bind GTP. The tract at residues 136–139 (NKCD) is G4. Positions 174-176 (SAL) are G5.

The protein belongs to the TRAFAC class translation factor GTPase superfamily. Classic translation factor GTPase family. EF-Tu/EF-1A subfamily. Monomer.

It is found in the cytoplasm. The catalysed reaction is GTP + H2O = GDP + phosphate + H(+). In terms of biological role, GTP hydrolase that promotes the GTP-dependent binding of aminoacyl-tRNA to the A-site of ribosomes during protein biosynthesis. The polypeptide is Elongation factor Tu (Bacillus anthracis (strain A0248)).